Here is a 427-residue protein sequence, read N- to C-terminus: Glutamate-1-semialdehyde 2,1-aminomutase (427 aa).

Lysine 265 is modified (N6-(pyridoxal phosphate)lysine).

The protein belongs to the class-III pyridoxal-phosphate-dependent aminotransferase family. HemL subfamily. Homodimer. The cofactor is pyridoxal 5'-phosphate.

Its subcellular location is the cytoplasm. The enzyme catalyses (S)-4-amino-5-oxopentanoate = 5-aminolevulinate. Its pathway is porphyrin-containing compound metabolism; protoporphyrin-IX biosynthesis; 5-aminolevulinate from L-glutamyl-tRNA(Glu): step 2/2. This chain is Glutamate-1-semialdehyde 2,1-aminomutase, found in Paraburkholderia phytofirmans (strain DSM 17436 / LMG 22146 / PsJN) (Burkholderia phytofirmans).